The primary structure comprises 100 residues: Aspartyl/glutamyl-tRNA(Asn/Gln) amidotransferase subunit C (100 aa).

The protein belongs to the GatC family. In terms of assembly, heterotrimer of A, B and C subunits.

The catalysed reaction is L-glutamyl-tRNA(Gln) + L-glutamine + ATP + H2O = L-glutaminyl-tRNA(Gln) + L-glutamate + ADP + phosphate + H(+). It catalyses the reaction L-aspartyl-tRNA(Asn) + L-glutamine + ATP + H2O = L-asparaginyl-tRNA(Asn) + L-glutamate + ADP + phosphate + 2 H(+). Allows the formation of correctly charged Asn-tRNA(Asn) or Gln-tRNA(Gln) through the transamidation of misacylated Asp-tRNA(Asn) or Glu-tRNA(Gln) in organisms which lack either or both of asparaginyl-tRNA or glutaminyl-tRNA synthetases. The reaction takes place in the presence of glutamine and ATP through an activated phospho-Asp-tRNA(Asn) or phospho-Glu-tRNA(Gln). This chain is Aspartyl/glutamyl-tRNA(Asn/Gln) amidotransferase subunit C, found in Novosphingobium aromaticivorans (strain ATCC 700278 / DSM 12444 / CCUG 56034 / CIP 105152 / NBRC 16084 / F199).